We begin with the raw amino-acid sequence, 98 residues long: Cell division protein FtsB (98 aa).

Residues 1 to 3 (MKR) are Cytoplasmic-facing. A helical transmembrane segment spans residues 4-21 (LLFVLIALLAMLQYRLWL). At 22 to 98 (GDKSLADSFH…GGERGGVPEN (77 aa)) the chain is on the periplasmic side. Residues 31-74 (HLQEQIKLQQQSNAQLVARNQVLREEISDLRSGTEALEERARNE) are a coiled coil.

This sequence belongs to the FtsB family. As to quaternary structure, part of a complex composed of FtsB, FtsL and FtsQ.

The protein resides in the cell inner membrane. Functionally, essential cell division protein. May link together the upstream cell division proteins, which are predominantly cytoplasmic, with the downstream cell division proteins, which are predominantly periplasmic. This Shewanella pealeana (strain ATCC 700345 / ANG-SQ1) protein is Cell division protein FtsB.